Reading from the N-terminus, the 985-residue chain is UPF0182 protein Cgl0786/cg0896 (985 aa).

7 consecutive transmembrane segments (helical) span residues 19-39 (VTWI…SVGF), 63-83 (IVLF…AGYF), 115-135 (VMVI…QRSW), 176-196 (SMML…MGGI), 215-235 (TQLA…YWLD), 262-282 (KIIL…AIFL), and 290-310 (LAVV…PLML). Positions 904–944 (KEAQDIEEVDGTATTPSTDETDTDTDQPATETPTAPVSEAE) are disordered. Positions 929 to 939 (DQPATETPTAP) are enriched in low complexity.

The protein belongs to the UPF0182 family.

The protein resides in the cell membrane. This chain is UPF0182 protein Cgl0786/cg0896, found in Corynebacterium glutamicum (strain ATCC 13032 / DSM 20300 / JCM 1318 / BCRC 11384 / CCUG 27702 / LMG 3730 / NBRC 12168 / NCIMB 10025 / NRRL B-2784 / 534).